Here is a 596-residue protein sequence, read N- to C-terminus: Elongation factor 4 (596 aa).

A tr-type G domain is found at 2–184 (KHIRNFSIIA…VIVAQIPPPE (183 aa)). Residues 14–19 (DHGKST) and 131–134 (NKID) contribute to the GTP site.

This sequence belongs to the TRAFAC class translation factor GTPase superfamily. Classic translation factor GTPase family. LepA subfamily.

It is found in the cell inner membrane. It catalyses the reaction GTP + H2O = GDP + phosphate + H(+). Required for accurate and efficient protein synthesis under certain stress conditions. May act as a fidelity factor of the translation reaction, by catalyzing a one-codon backward translocation of tRNAs on improperly translocated ribosomes. Back-translocation proceeds from a post-translocation (POST) complex to a pre-translocation (PRE) complex, thus giving elongation factor G a second chance to translocate the tRNAs correctly. Binds to ribosomes in a GTP-dependent manner. This is Elongation factor 4 from Shewanella halifaxensis (strain HAW-EB4).